The sequence spans 117 residues: Non-specific lipid-transfer protein 3 (117 aa).

Residues 1–25 (MAGLVKLSCLVLACMIVAGPIATNA) form the signal peptide. Intrachain disulfides connect Cys-29–Cys-76, Cys-39–Cys-53, Cys-54–Cys-99, and Cys-74–Cys-113.

Belongs to the plant LTP family.

In terms of biological role, plant non-specific lipid-transfer proteins transfer phospholipids as well as galactolipids across membranes. May play a role in wax or cutin deposition in the cell walls of expanding epidermal cells and certain secretory tissues. The polypeptide is Non-specific lipid-transfer protein 3 (LTP3) (Brassica napus (Rape)).